Here is a 678-residue protein sequence, read N- to C-terminus: Protein mono-ADP-ribosyltransferase PARP15 (678 aa).

Positions 1–19 are enriched in low complexity; sequence MAAPGPLPAAALSPGAPTP. The segment at 1-67 is disordered; sequence MAAPGPLPAA…SSRSMSRDNK (67 aa). Residues 49-58 are compositionally biased toward basic residues; the sequence is GARKASRRSS. 2 Macro domains span residues 78 to 267 and 293 to 464; these read NVVA…TNWS and CFTA…KKRD. Residues 312-313, 324-325, Arg-331, Val-335, 409-413, and Gln-449 contribute to the substrate site; these read DI, ST, and GTGNA. The 197-residue stretch at 482 to 678 folds into the PARP catalytic domain; it reads LPEHWTDMNH…YPEYLITFTA (197 aa).

Belongs to the ARTD/PARP family.

It localises to the nucleus. It carries out the reaction L-aspartyl-[protein] + NAD(+) = 4-O-(ADP-D-ribosyl)-L-aspartyl-[protein] + nicotinamide. The catalysed reaction is L-glutamyl-[protein] + NAD(+) = 5-O-(ADP-D-ribosyl)-L-glutamyl-[protein] + nicotinamide. Mono-ADP-ribosyltransferase that mediates mono-ADP-ribosylation of target proteins. Acts as a negative regulator of transcription. This chain is Protein mono-ADP-ribosyltransferase PARP15, found in Homo sapiens (Human).